The sequence spans 166 residues: Crossover junction endodeoxyribonuclease RuvC (166 aa).

Catalysis depends on residues D7, E67, and D140. The Mg(2+) site is built by D7, E67, and D140.

It belongs to the RuvC family. As to quaternary structure, homodimer which binds Holliday junction (HJ) DNA. The HJ becomes 2-fold symmetrical on binding to RuvC with unstacked arms; it has a different conformation from HJ DNA in complex with RuvA. In the full resolvosome a probable DNA-RuvA(4)-RuvB(12)-RuvC(2) complex forms which resolves the HJ. It depends on Mg(2+) as a cofactor.

Its subcellular location is the cytoplasm. The catalysed reaction is Endonucleolytic cleavage at a junction such as a reciprocal single-stranded crossover between two homologous DNA duplexes (Holliday junction).. The RuvA-RuvB-RuvC complex processes Holliday junction (HJ) DNA during genetic recombination and DNA repair. Endonuclease that resolves HJ intermediates. Cleaves cruciform DNA by making single-stranded nicks across the HJ at symmetrical positions within the homologous arms, yielding a 5'-phosphate and a 3'-hydroxyl group; requires a central core of homology in the junction. The consensus cleavage sequence is 5'-(A/T)TT(C/G)-3'. Cleavage occurs on the 3'-side of the TT dinucleotide at the point of strand exchange. HJ branch migration catalyzed by RuvA-RuvB allows RuvC to scan DNA until it finds its consensus sequence, where it cleaves and resolves the cruciform DNA. This chain is Crossover junction endodeoxyribonuclease RuvC, found in Brevibacillus brevis (strain 47 / JCM 6285 / NBRC 100599).